Reading from the N-terminus, the 428-residue chain is Immunoglobulin superfamily member 11 (428 aa).

Residues 1-22 form the signal peptide; sequence MTRRRSAPASWLLVSLLGVATS. One can recognise an Ig-like V-type domain in the interval 23-136; the sequence is LEVSESPGSV…DRGGRNIGVT (114 aa). Residues 23–240 are Extracellular-facing; the sequence is LEVSESPGSV…QVISPQPRSV (218 aa). 2 cysteine pairs are disulfide-bonded: C44–C120 and C165–C215. An N-linked (GlcNAc...) asparagine glycan is attached at N102. One can recognise an Ig-like C2-type domain in the interval 144-234; it reads PSAPQCQIQG…TCLLDLQVIS (91 aa). The helical transmembrane segment at 241-261 threads the bilayer; that stretch reads GVIAGAVGTGAVLIVICLALI. Over 262–428 the chain is Cytoplasmic; it reads SGAFFYWRSK…PAQSRAGSLV (167 aa). An Omega-N-methylarginine modification is found at R375. The segment covering 376–389 has biased composition (polar residues); that stretch reads GSSPQVLPRNNGSV. The tract at residues 376-396 is disordered; the sequence is GSSPQVLPRNNGSVSRKPWPQ.

N-glycosylated. Highly expressed in testis and detected in kidney and adrenal gland. In brain, expressed in commissure fibers of the corpus callosum and pyramidal cell layers of the dentate gyrus and hippocampus where it is probably expressed by both neurons and glial cells.

It is found in the cell membrane. In terms of biological role, functions as a cell adhesion molecule through homophilic interaction. Stimulates cell growth. This chain is Immunoglobulin superfamily member 11 (Igsf11), found in Mus musculus (Mouse).